A 350-amino-acid chain; its full sequence is MKVSSQLAVAALASFATAASVDVHKRETPLSVKLAASGNSEVKVTLTNNGEKTLNLLSKGTFLDEQLPVEKVQMYAAGGSDKVAFEGMKVRLLTSGLKADDFVTLAAGETKEITVETAALHSLHEGGDFDVFAKGALPFAEGASTELAGALDYESNKLSMTIDGAQAASVAKALNKRTAIGSSCTGTKLSTVRTALSNCARLANAAASAATSGTKLTTYFKTTSSASTVAARLRAVASDCGSTSSRTTTNCNDPYSGCSSNVLAYTVPSANFITYCPIFFSALPALASTCHGQDQATTALHEETHAPGVYSPGTQDNGYGYAAATALSANQALNNADSYALYANAINLNC.

Residues M1–A18 form the signal peptide. Positions A19–I180 are excised as a propeptide. Intrachain disulfides connect C184/C251 and C258/C276. H301 lines the Zn(2+) pocket. E302 is a catalytic residue. The Zn(2+) site is built by H305 and D316.

This sequence belongs to the peptidase M35 family. The cofactor is Zn(2+).

The protein localises to the secreted. The enzyme catalyses Preferential cleavage of bonds with hydrophobic residues in P1'. Also 3-Asn-|-Gln-4 and 8-Gly-|-Ser-9 bonds in insulin B chain.. Functionally, secreted metalloproteinase that allows assimilation of proteinaceous substrates. Shows high activities on basic nuclear substrates such as histone and protamine. This Phaeosphaeria nodorum (strain SN15 / ATCC MYA-4574 / FGSC 10173) (Glume blotch fungus) protein is Neutral protease 2 homolog SNOG_10522.